A 192-amino-acid chain; its full sequence is Large ribosomal subunit protein uL24c (192 aa).

The transit peptide at 1 to 47 directs the protein to the chloroplast; it reads MAAMAALQSSFTSLSLSSNSFLGQRLFPSPTTLQVKTEGHSPCLIVM.

As to quaternary structure, component of the chloroplast large ribosomal subunit (LSU). Mature 70S chloroplast ribosomes of higher plants consist of a small (30S) and a large (50S) subunit. The 30S small subunit contains 1 molecule of ribosomal RNA (16S rRNA) and 24 different proteins. The 50S large subunit contains 3 rRNA molecules (23S, 5S and 4.5S rRNA) and 33 different proteins.

Its subcellular location is the plastid. The protein localises to the chloroplast. Its function is as follows. Component of the chloroplast ribosome (chloro-ribosome), a dedicated translation machinery responsible for the synthesis of chloroplast genome-encoded proteins, including proteins of the transcription and translation machinery and components of the photosynthetic apparatus. The polypeptide is Large ribosomal subunit protein uL24c (RPL24) (Spinacia oleracea (Spinach)).